We begin with the raw amino-acid sequence, 234 residues long: Riboflavin kinase (234 aa).

The tract at residues 1 to 98 is H-T-H motif-like; sequence MAESTTAVGH…QEIFGDNSSV (98 aa). Positions 99 to 234 are riboflavin kinase; the sequence is VELTGTVTSG…RITVQLKPKE (136 aa). 108–113 is a binding site for CDP; the sequence is GMGEGR. Mg(2+) is bound by residues Thr-137 and Asn-139. The FMN site is built by Thr-199 and Glu-207. Position 212 to 215 (212 to 215) interacts with CDP; the sequence is ERLR.

Belongs to the archaeal riboflavin kinase family. Mg(2+) serves as cofactor.

It carries out the reaction riboflavin + CTP = CDP + FMN + H(+). The protein operates within cofactor biosynthesis; FMN biosynthesis; FMN from riboflavin (CTP route): step 1/1. Catalyzes the CTP-dependent phosphorylation of riboflavin (vitamin B2) to form flavin mononucleotide (FMN). The chain is Riboflavin kinase (ribK) from Haloquadratum walsbyi (strain DSM 16790 / HBSQ001).